A 339-amino-acid polypeptide reads, in one-letter code: tRNA-dihydrouridine(20/20a) synthase (339 aa).

FMN contacts are provided by residues Pro26–Leu28 and Gln78. Cys108 functions as the Proton donor in the catalytic mechanism. FMN-binding positions include Lys147, His180, Asn220–Gly222, and Gly242–Arg243.

The protein belongs to the Dus family. DusA subfamily. FMN is required as a cofactor.

It catalyses the reaction 5,6-dihydrouridine(20) in tRNA + NADP(+) = uridine(20) in tRNA + NADPH + H(+). The catalysed reaction is 5,6-dihydrouridine(20) in tRNA + NAD(+) = uridine(20) in tRNA + NADH + H(+). It carries out the reaction 5,6-dihydrouridine(20a) in tRNA + NADP(+) = uridine(20a) in tRNA + NADPH + H(+). The enzyme catalyses 5,6-dihydrouridine(20a) in tRNA + NAD(+) = uridine(20a) in tRNA + NADH + H(+). In terms of biological role, catalyzes the synthesis of 5,6-dihydrouridine (D), a modified base found in the D-loop of most tRNAs, via the reduction of the C5-C6 double bond in target uridines. Specifically modifies U20 and U20a in tRNAs. The protein is tRNA-dihydrouridine(20/20a) synthase of Shigella flexneri.